The primary structure comprises 151 residues: MATIENRLEEMLKSPVEALGHTLWGLEYVQAGKHSILRVYIDNEKGIFIEDCAETSRQVSAVLDVEDPISTEYTLEVSSPGVDRPLFKAEQYAAYIDETVKIQLTMPVAGSRNLKGTITGIEGQMLSLTVDGNELIIALDNIRKGNLIAKF.

Belongs to the RimP family.

The protein localises to the cytoplasm. In terms of biological role, required for maturation of 30S ribosomal subunits. This is Ribosome maturation factor RimP from Shewanella sediminis (strain HAW-EB3).